The chain runs to 284 residues: MNYNKFELMEFDLNKMVIDPSIVMIAKRGSGKSWIVRDVMYHYRHLPCGVVIAPTDRMNSFYKYFFPDLFIHYEITEAILKNILLRQQMIIDKQKQKKKQGLKIDPSGILIMDDCLSQKKNWSKIQEITEILMNGRHYRLTYVLTMQTPLGLTPDLRLNFDYIFLLKDDTQVNKKKLYNNYAGMFPSQLAFEKVLAKCTEGHKCMVIDNRKPADKIQDKVFWFKARDRKFSFGAREFKDMHKKYYNPEYGRDRYRKLMEGEDVLFGLKKNDTNLKVNLREIPTH.

This is an uncharacterized protein from Acanthamoeba polyphaga (Amoeba).